The following is a 318-amino-acid chain: NADH-ubiquinone oxidoreductase chain 1 (318 aa).

Transmembrane regions (helical) follow at residues phenylalanine 2–leucine 22, methionine 70–proline 90, leucine 100–glycine 120, alanine 147–isoleucine 167, tyrosine 171–alanine 191, alanine 217–phenylalanine 237, glutamate 253–isoleucine 273, and leucine 294–isoleucine 314.

Belongs to the complex I subunit 1 family. As to quaternary structure, core subunit of respiratory chain NADH dehydrogenase (Complex I) which is composed of 45 different subunits.

The protein localises to the mitochondrion inner membrane. The enzyme catalyses a ubiquinone + NADH + 5 H(+)(in) = a ubiquinol + NAD(+) + 4 H(+)(out). Core subunit of the mitochondrial membrane respiratory chain NADH dehydrogenase (Complex I) which catalyzes electron transfer from NADH through the respiratory chain, using ubiquinone as an electron acceptor. Essential for the catalytic activity and assembly of complex I. The protein is NADH-ubiquinone oxidoreductase chain 1 (MT-ND1) of Equus caballus (Horse).